We begin with the raw amino-acid sequence, 130 residues long: Small ribosomal subunit protein uS8 (130 aa).

Belongs to the universal ribosomal protein uS8 family. As to quaternary structure, part of the 30S ribosomal subunit.

In terms of biological role, one of the primary rRNA binding proteins, it binds directly to 16S rRNA central domain where it helps coordinate assembly of the platform of the 30S subunit. In Methanopyrus kandleri (strain AV19 / DSM 6324 / JCM 9639 / NBRC 100938), this protein is Small ribosomal subunit protein uS8.